The following is a 384-amino-acid chain: L-type lectin-like domain-containing protein C4F6.05c (384 aa).

A signal peptide spans 1–19; the sequence is MKFCSLFHVLSFCCTLAYA. The region spanning 20-224 is the L-type lectin-like domain; that stretch reads VPKSQFLQLH…DLVALSNLNI (205 aa). The Extracellular segment spans residues 20–353; sequence VPKSQFLQLH…AMGNAYSPYN (334 aa). Residues 227-251 are disordered; it reads PDTSNNENLNPTSNTKQSVGDNTSP. A helical transmembrane segment spans residues 354–374; that stretch reads LTNFMVFLLLGAIVSYGIMLV. Residues 375–384 lie on the Cytoplasmic side of the membrane; that stretch reads RRDRRRHKYL.

The protein resides in the membrane. Its subcellular location is the endoplasmic reticulum. The protein localises to the golgi apparatus. This is L-type lectin-like domain-containing protein C4F6.05c from Schizosaccharomyces pombe (strain 972 / ATCC 24843) (Fission yeast).